Reading from the N-terminus, the 134-residue chain is ATP synthase epsilon chain (134 aa).

This sequence belongs to the ATPase epsilon chain family. In terms of assembly, F-type ATPases have 2 components, CF(1) - the catalytic core - and CF(0) - the membrane proton channel. CF(1) has five subunits: alpha(3), beta(3), gamma(1), delta(1), epsilon(1). CF(0) has three main subunits: a, b and c.

It is found in the cellular thylakoid membrane. Its function is as follows. Produces ATP from ADP in the presence of a proton gradient across the membrane. The polypeptide is ATP synthase epsilon chain (Prochlorococcus marinus (strain AS9601)).